Here is a 607-residue protein sequence, read N- to C-terminus: Arginine decarboxylase (607 aa).

Position 104 is an N6-(pyridoxal phosphate)lysine (Lys-104). 290 to 300 (LDCGGGLGVDY) contacts substrate.

The protein belongs to the Orn/Lys/Arg decarboxylase class-II family. SpeA subfamily. The cofactor is pyridoxal 5'-phosphate. Mg(2+) serves as cofactor.

It catalyses the reaction L-arginine + H(+) = agmatine + CO2. It participates in amine and polyamine biosynthesis; agmatine biosynthesis; agmatine from L-arginine: step 1/1. The sequence is that of Arginine decarboxylase (SPE1) from Avena sativa (Oat).